The primary structure comprises 126 residues: Large ribosomal subunit protein bL12 (126 aa).

It belongs to the bacterial ribosomal protein bL12 family. As to quaternary structure, homodimer. Part of the ribosomal stalk of the 50S ribosomal subunit. Forms a multimeric L10(L12)X complex, where L10 forms an elongated spine to which 2 to 4 L12 dimers bind in a sequential fashion. Binds GTP-bound translation factors.

Forms part of the ribosomal stalk which helps the ribosome interact with GTP-bound translation factors. Is thus essential for accurate translation. The polypeptide is Large ribosomal subunit protein bL12 (Methylorubrum populi (strain ATCC BAA-705 / NCIMB 13946 / BJ001) (Methylobacterium populi)).